A 542-amino-acid polypeptide reads, in one-letter code: Chaperonin GroEL 3 (542 aa).

ATP is bound by residues 30–33, Lys-51, 87–91, Gly-415, and Asp-494; these read TLGP and DGTTT. The tract at residues 523–542 is disordered; it reads KPKKKEPPMPAMPSDMGDYD.

It belongs to the chaperonin (HSP60) family. Forms a cylinder of 14 subunits composed of two heptameric rings stacked back-to-back. Interacts with the co-chaperonin GroES.

It is found in the cytoplasm. The catalysed reaction is ATP + H2O + a folded polypeptide = ADP + phosphate + an unfolded polypeptide.. In terms of biological role, together with its co-chaperonin GroES, plays an essential role in assisting protein folding. The GroEL-GroES system forms a nano-cage that allows encapsulation of the non-native substrate proteins and provides a physical environment optimized to promote and accelerate protein folding. In Syntrophus aciditrophicus (strain SB), this protein is Chaperonin GroEL 3.